Reading from the N-terminus, the 418-residue chain is IQ domain-containing protein C (418 aa).

An IQ domain is found at 6–35; that stretch reads FLRKVSTLQAGFRGFLVRRQFQSLRAEYEA. Disordered stretches follow at residues 101 to 142, 230 to 264, 280 to 299, 327 to 355, and 376 to 418; these read QKKT…SVSK, HHAE…KGRE, SQAG…QPFK, AETQ…AGPC, and GSLD…LQWR. 2 stretches are compositionally biased toward polar residues: residues 129-142 and 249-259; these read KASQ…SVSK and SVTSAGKTTAG. A coiled-coil region spans residues 141-176; it reads SKMENADLGLSQSQQELQEQRNHLAMELLWLQQAIN. Over residues 390-404 the composition is skewed to polar residues; the sequence is PPSAGSSGHGNTSEL.

This Mus musculus (Mouse) protein is IQ domain-containing protein C (Iqcc).